Reading from the N-terminus, the 527-residue chain is D-3-phosphoglycerate dehydrogenase (527 aa).

NAD(+) is bound by residues 149–150 (RV), aspartate 169, 228–230 (AAR), and aspartate 254. Arginine 230 is a catalytic residue. Residue glutamate 259 is part of the active site. Catalysis depends on histidine 278, which acts as the Proton donor. NAD(+) is bound at residue 278–281 (HIAA). The ACT domain maps to 453–527 (YIISLHEDKP…GIIDATYVEL (75 aa)).

This sequence belongs to the D-isomer specific 2-hydroxyacid dehydrogenase family.

It catalyses the reaction (2R)-3-phosphoglycerate + NAD(+) = 3-phosphooxypyruvate + NADH + H(+). It participates in amino-acid biosynthesis; L-serine biosynthesis; L-serine from 3-phospho-D-glycerate: step 1/3. The protein is D-3-phosphoglycerate dehydrogenase (serA) of Archaeoglobus fulgidus (strain ATCC 49558 / DSM 4304 / JCM 9628 / NBRC 100126 / VC-16).